A 467-amino-acid chain; its full sequence is Heat shock factor protein 3 (467 aa).

A DNA-binding region spans residues 16–121; sequence VPGFLAKLWA…LLENIKRKVS (106 aa). The tract at residues 128-201 is hydrophobic repeat HR-A/B; sequence LKVCAEDLHK…LSLMRGNYIV (74 aa). A hydrophobic repeat HR-C region spans residues 364–389; the sequence is IQDFLNCIDASLEELQAMLSGKQYSF. The disordered stretch occupies residues 427–449; the sequence is EDLGASERETAGSKGGQEGTESC.

The protein belongs to the HSF family. As to quaternary structure, homotrimer. As to expression, expressed in most tissues. High levels are found in erythrocytes and low levels in liver.

It localises to the cytoplasm. Its subcellular location is the nucleus. Its function is as follows. DNA-binding protein that specifically binds heat shock promoter elements (HSE) and activates transcription. HSF3 binds DNA constitutively only when the C-terminal region is deleted. This chain is Heat shock factor protein 3 (HSF3), found in Gallus gallus (Chicken).